An 85-amino-acid chain; its full sequence is Small ribosomal subunit protein uS12m (85 aa).

This sequence belongs to the universal ribosomal protein uS12 family.

It localises to the mitochondrion matrix. It is found in the kinetoplast. Protein S12 is involved in the translation initiation step. This Leishmania tarentolae (Sauroleishmania tarentolae) protein is Small ribosomal subunit protein uS12m (RPS12).